The following is a 592-amino-acid chain: Aspartate--tRNA ligase (592 aa).

An L-aspartate-binding site is contributed by Glu-171. Positions Gln-195–Lys-198 are aspartate. Arg-217 is an L-aspartate binding site. ATP-binding positions include Arg-217–Glu-219 and Gln-226. Position 448 (His-448) interacts with L-aspartate. Glu-482 contacts ATP. An L-aspartate-binding site is contributed by Arg-489. Gly-534 to Arg-537 contributes to the ATP binding site.

The protein belongs to the class-II aminoacyl-tRNA synthetase family. Type 1 subfamily. In terms of assembly, homodimer.

The protein localises to the cytoplasm. It catalyses the reaction tRNA(Asp) + L-aspartate + ATP = L-aspartyl-tRNA(Asp) + AMP + diphosphate. In terms of biological role, catalyzes the attachment of L-aspartate to tRNA(Asp) in a two-step reaction: L-aspartate is first activated by ATP to form Asp-AMP and then transferred to the acceptor end of tRNA(Asp). This Vibrio vulnificus (strain CMCP6) protein is Aspartate--tRNA ligase.